The primary structure comprises 102 residues: MHVKKGDKVVVITGKDKGKQGTVLEAYPKKSRVLVEGVNMVKKHAKPSQDNPQGGILNQEAPIHSSNVMLVDPKTGERTRVGYKEENGKKVRVAKKSGEIIK.

Residues 44 to 65 (HAKPSQDNPQGGILNQEAPIHS) form a disordered region.

The protein belongs to the universal ribosomal protein uL24 family. As to quaternary structure, part of the 50S ribosomal subunit.

In terms of biological role, one of two assembly initiator proteins, it binds directly to the 5'-end of the 23S rRNA, where it nucleates assembly of the 50S subunit. One of the proteins that surrounds the polypeptide exit tunnel on the outside of the subunit. The protein is Large ribosomal subunit protein uL24 of Shouchella clausii (strain KSM-K16) (Alkalihalobacillus clausii).